Consider the following 901-residue polypeptide: HTH-type transcriptional regulator MalT (901 aa).

39–46 (SPAGYGKT) contacts ATP. One can recognise an HTH luxR-type domain in the interval 829 to 894 (ELIRTSPLTQ…AAVQHAQKLL (66 aa)). Positions 853–872 (NEQIAGELEVAATTIKTHIR) form a DNA-binding region, H-T-H motif.

This sequence belongs to the MalT family. Monomer in solution. Oligomerizes to an active state in the presence of the positive effectors ATP and maltotriose.

With respect to regulation, activated by ATP and maltotriose, which are both required for DNA binding. Positively regulates the transcription of the maltose regulon whose gene products are responsible for uptake and catabolism of malto-oligosaccharides. Specifically binds to the promoter region of its target genes, recognizing a short DNA motif called the MalT box. The polypeptide is HTH-type transcriptional regulator MalT (Escherichia coli O45:K1 (strain S88 / ExPEC)).